The chain runs to 109 residues: uncharacterized protein (109 aa).

To E.coli YtfG C-terminal region.

This is an uncharacterized protein from Haemophilus influenzae (strain ATCC 51907 / DSM 11121 / KW20 / Rd).